The sequence spans 151 residues: Cyanate hydratase (151 aa).

Residues Arg-92, Glu-95, and Ser-118 contribute to the active site.

Belongs to the cyanase family.

The catalysed reaction is cyanate + hydrogencarbonate + 3 H(+) = NH4(+) + 2 CO2. Catalyzes the reaction of cyanate with bicarbonate to produce ammonia and carbon dioxide. This chain is Cyanate hydratase, found in Coprinopsis cinerea (strain Okayama-7 / 130 / ATCC MYA-4618 / FGSC 9003) (Inky cap fungus).